A 331-amino-acid chain; its full sequence is 4-hydroxy-3-methylbut-2-enyl diphosphate reductase (331 aa).

Cysteine 12 lines the [4Fe-4S] cluster pocket. (2E)-4-hydroxy-3-methylbut-2-enyl diphosphate is bound by residues histidine 43 and histidine 81. Dimethylallyl diphosphate contacts are provided by histidine 43 and histidine 81. Isopentenyl diphosphate-binding residues include histidine 43 and histidine 81. Cysteine 103 is a binding site for [4Fe-4S] cluster. Residue histidine 131 coordinates (2E)-4-hydroxy-3-methylbut-2-enyl diphosphate. Histidine 131 lines the dimethylallyl diphosphate pocket. Histidine 131 contributes to the isopentenyl diphosphate binding site. Catalysis depends on glutamate 133, which acts as the Proton donor. A (2E)-4-hydroxy-3-methylbut-2-enyl diphosphate-binding site is contributed by threonine 170. Cysteine 198 serves as a coordination point for [4Fe-4S] cluster. (2E)-4-hydroxy-3-methylbut-2-enyl diphosphate-binding residues include serine 226, asparagine 228, and serine 271. Positions 226, 228, and 271 each coordinate dimethylallyl diphosphate. Residues serine 226, asparagine 228, and serine 271 each coordinate isopentenyl diphosphate.

It belongs to the IspH family. Requires [4Fe-4S] cluster as cofactor.

It catalyses the reaction isopentenyl diphosphate + 2 oxidized [2Fe-2S]-[ferredoxin] + H2O = (2E)-4-hydroxy-3-methylbut-2-enyl diphosphate + 2 reduced [2Fe-2S]-[ferredoxin] + 2 H(+). The catalysed reaction is dimethylallyl diphosphate + 2 oxidized [2Fe-2S]-[ferredoxin] + H2O = (2E)-4-hydroxy-3-methylbut-2-enyl diphosphate + 2 reduced [2Fe-2S]-[ferredoxin] + 2 H(+). Its pathway is isoprenoid biosynthesis; dimethylallyl diphosphate biosynthesis; dimethylallyl diphosphate from (2E)-4-hydroxy-3-methylbutenyl diphosphate: step 1/1. It functions in the pathway isoprenoid biosynthesis; isopentenyl diphosphate biosynthesis via DXP pathway; isopentenyl diphosphate from 1-deoxy-D-xylulose 5-phosphate: step 6/6. In terms of biological role, catalyzes the conversion of 1-hydroxy-2-methyl-2-(E)-butenyl 4-diphosphate (HMBPP) into a mixture of isopentenyl diphosphate (IPP) and dimethylallyl diphosphate (DMAPP). Acts in the terminal step of the DOXP/MEP pathway for isoprenoid precursor biosynthesis. In Listeria monocytogenes serovar 1/2a (strain ATCC BAA-679 / EGD-e), this protein is 4-hydroxy-3-methylbut-2-enyl diphosphate reductase.